We begin with the raw amino-acid sequence, 535 residues long: MSLKLNIQRWLFSTNAKDIAVLYFIFALFSAMIGTGLSAIIRLELANTGSPFLHGNTQAFNVVITAHAILMIFFFVMPALVGGFGNYLMPLMLGASDMAFARLNNISFWLLVPSLILILTSALVEAGAGTGWTVYFPLAGIQSHSGPAVDLAIFSLHLSGFSSLLGAINFITTFINMRTIGMKYENVPLFAWAVLFTAILLLLSLPVLAAGLTMGIFDRNFNTSFFEYAGGGDAVLYQHLFYWWNHPEVYILIIPGFGIISHAVSAIASKPVFGVQGMIYAMWSIGLLGFCVWSHHMFAVGLDSDTRAYFTSATMVIAVPTSIKIFSWLATLYGGTIRLNVTALFALGFIFLFTIGGLTGVVLANSALDIPFHDSYYVVAHFHYVLSMGAVFSIFCGWYLWSPKILGLHYNERLSHIHFWLMFIGVNVTFFPMHFLGLQGMPRRINDYPDAFIGWNQVASLGSIISIVASIVFIYVVYDQLTNGLHQGNKALDSQFKPSFMGTNLNVEGYTGPTLEWTVSTPPSLHAFNTPAVLY.

Residues 21-43 traverse the membrane as a helical segment; sequence VLYFIFALFSAMIGTGLSAIIRL. Residues E44 and G49 each coordinate Ca(2+). The next 6 helical transmembrane spans lie at 63–85, 106–128, 153–175, 188–210, 242–264, and 271–293; these read VITAHAILMIFFFVMPALVGGFG, ISFWLLVPSLILILTSALVEAGA, IFSLHLSGFSSLLGAINFITTFI, PLFAWAVLFTAILLLLSLPVLAA, YWWNHPEVYILIIPGFGIISHAV, and PVFGVQGMIYAMWSIGLLGFCVW. H67 serves as a coordination point for Fe(II)-heme a. H246 contributes to the Cu cation binding site. A cross-link (1'-histidyl-3'-tyrosine (His-Tyr)) is located at residues 246 to 250; the sequence is HPEVY. Residue Y250 participates in O2 binding. Cu cation-binding residues include H295 and H296. Helical transmembrane passes span 308 to 330 and 342 to 364; these read AYFTSATMVIAVPTSIKIFSWLA and TALFALGFIFLFTIGGLTGVVLA. 2 residues coordinate Mg(2+): H373 and D374. A run of 3 helical transmembrane segments spans residues 379–401, 414–436, and 456–478; these read VAHFHYVLSMGAVFSIFCGWYLW, LSHIHFWLMFIGVNVTFFPMHFL, and NQVASLGSIISIVASIVFIYVVY. H381 is a binding site for heme a3. H383 serves as a coordination point for Fe(II)-heme a.

Belongs to the heme-copper respiratory oxidase family. Component of the cytochrome c oxidase (complex IV, CIV), a multisubunit enzyme composed of a catalytic core of 3 subunits and several supernumerary subunits. The complex exists as a monomer or a dimer and forms supercomplexes (SCs) in the inner mitochondrial membrane with ubiquinol-cytochrome c oxidoreductase (cytochrome b-c1 complex, complex III, CIII). Heme serves as cofactor. Requires Cu cation as cofactor.

The protein localises to the mitochondrion inner membrane. The catalysed reaction is 4 Fe(II)-[cytochrome c] + O2 + 8 H(+)(in) = 4 Fe(III)-[cytochrome c] + 2 H2O + 4 H(+)(out). The protein operates within energy metabolism; oxidative phosphorylation. In terms of biological role, component of the cytochrome c oxidase, the last enzyme in the mitochondrial electron transport chain which drives oxidative phosphorylation. The respiratory chain contains 3 multisubunit complexes succinate dehydrogenase (complex II, CII), ubiquinol-cytochrome c oxidoreductase (cytochrome b-c1 complex, complex III, CIII) and cytochrome c oxidase (complex IV, CIV), that cooperate to transfer electrons derived from NADH and succinate to molecular oxygen, creating an electrochemical gradient over the inner membrane that drives transmembrane transport and the ATP synthase. Cytochrome c oxidase is the component of the respiratory chain that catalyzes the reduction of oxygen to water. Electrons originating from reduced cytochrome c in the intermembrane space (IMS) are transferred via the dinuclear copper A center (CU(A)) of subunit 2 and heme A of subunit 1 to the active site in subunit 1, a binuclear center (BNC) formed by heme A3 and copper B (CU(B)). The BNC reduces molecular oxygen to 2 water molecules using 4 electrons from cytochrome c in the IMS and 4 protons from the mitochondrial matrix. The sequence is that of Cytochrome c oxidase subunit 1 (COX1) from Yarrowia lipolytica (strain CLIB 122 / E 150) (Yeast).